Consider the following 225-residue polypeptide: Small ribosomal subunit protein uS3 (225 aa).

In terms of domain architecture, KH type-2 spans 38–106; the sequence is IRKFIQSRFS…PVNLNIIEVK (69 aa).

The protein belongs to the universal ribosomal protein uS3 family. In terms of assembly, part of the 30S ribosomal subunit. Forms a tight complex with proteins S10 and S14.

Its function is as follows. Binds the lower part of the 30S subunit head. Binds mRNA in the 70S ribosome, positioning it for translation. This is Small ribosomal subunit protein uS3 from Leptospira borgpetersenii serovar Hardjo-bovis (strain JB197).